Here is a 244-residue protein sequence, read N- to C-terminus: 5-oxoprolinase subunit A (244 aa).

It belongs to the LamB/PxpA family. Forms a complex composed of PxpA, PxpB and PxpC.

It catalyses the reaction 5-oxo-L-proline + ATP + 2 H2O = L-glutamate + ADP + phosphate + H(+). Catalyzes the cleavage of 5-oxoproline to form L-glutamate coupled to the hydrolysis of ATP to ADP and inorganic phosphate. This chain is 5-oxoprolinase subunit A, found in Salmonella dublin (strain CT_02021853).